The sequence spans 381 residues: Metacaspase-8 (381 aa).

Catalysis depends on residues His86 and Cys140. Cys140 is modified (S-nitrosocysteine).

Belongs to the peptidase C14B family. Post-translationally, proteolytically processed; by an autocatalytic mechanism.

Its function is as follows. Cysteine protease that cleaves specifically after arginine residues. Does not cleave caspase-specific substrates. May be involved in the modulation of programmed cell death activated by oxidative stress. The chain is Metacaspase-8 (AMC8) from Arabidopsis thaliana (Mouse-ear cress).